The sequence spans 256 residues: H-2 class II histocompatibility antigen, A-K alpha chain (256 aa).

A signal peptide spans 1-23 (MPRSRALILGVLALTTMLSLCGG). The tract at residues 24–111 (EDDIEADHVG…KRSNSTPATN (88 aa)) is alpha-1. Topologically, residues 24–218 (EDDIEADHVG…IPAPMSELTE (195 aa)) are extracellular. 2 N-linked (GlcNAc...) asparagine glycosylation sites follow: N105 and N145. The segment at 112–205 (EAPQATVFPK…GLEEPVLKHW (94 aa)) is alpha-2. The Ig-like C1-type domain maps to 114–206 (PQATVFPKSP…LEEPVLKHWE (93 aa)). C134 and C190 are joined by a disulfide. Residues 206 to 218 (EPEIPAPMSELTE) form a connecting peptide region. Residues 219–241 (TVVCALGLSVGLVGIVVGTIFII) form a helical membrane-spanning segment. Residues 242 to 256 (QGLRSGGTSRHPGPL) lie on the Cytoplasmic side of the membrane.

The protein belongs to the MHC class II family.

The protein resides in the membrane. This chain is H-2 class II histocompatibility antigen, A-K alpha chain (H2-Aa), found in Mus musculus (Mouse).